The chain runs to 85 residues: Large ribosomal subunit protein bL27 (85 aa).

The interval 1–20 is disordered; that stretch reads MAHKKGASSSRNGRDSNAQR. The span at 7–19 shows a compositional bias: polar residues; sequence ASSSRNGRDSNAQ.

The protein belongs to the bacterial ribosomal protein bL27 family.

The chain is Large ribosomal subunit protein bL27 from Kineococcus radiotolerans (strain ATCC BAA-149 / DSM 14245 / SRS30216).